The following is a 544-amino-acid chain: Chaperonin GroEL 2 (544 aa).

ATP-binding positions include 29 to 32 (TLGP), 86 to 90 (DGTTT), Gly413, 479 to 481 (NAA), and Asp495.

It belongs to the chaperonin (HSP60) family. Forms a cylinder of 14 subunits composed of two heptameric rings stacked back-to-back. Interacts with the co-chaperonin GroES.

It is found in the cytoplasm. It carries out the reaction ATP + H2O + a folded polypeptide = ADP + phosphate + an unfolded polypeptide.. Together with its co-chaperonin GroES, plays an essential role in assisting protein folding. The GroEL-GroES system forms a nano-cage that allows encapsulation of the non-native substrate proteins and provides a physical environment optimized to promote and accelerate protein folding. This Synechococcus sp. (strain CC9605) protein is Chaperonin GroEL 2.